The chain runs to 370 residues: Molybdenum import ATP-binding protein ModC (370 aa).

Residues 1–232 enclose the ABC transporter domain; it reads MLDIDVLRQQ…PDIPDFAAQR (232 aa). Residue 30 to 37 participates in ATP binding; the sequence is GRSGAGKT. Positions 292–363 constitute a Mop domain; the sequence is MVSVQNILAA…IKAMSLLRDE (72 aa).

Belongs to the ABC transporter superfamily. Molybdate importer (TC 3.A.1.8) family. In terms of assembly, the complex is composed of two ATP-binding proteins (ModC), two transmembrane proteins (ModB) and a solute-binding protein (ModA).

The protein localises to the cell inner membrane. The catalysed reaction is molybdate(out) + ATP + H2O = molybdate(in) + ADP + phosphate + H(+). In terms of biological role, part of the ABC transporter complex ModABC involved in molybdenum import. Responsible for energy coupling to the transport system. This Rhodospirillum rubrum (strain ATCC 11170 / ATH 1.1.1 / DSM 467 / LMG 4362 / NCIMB 8255 / S1) protein is Molybdenum import ATP-binding protein ModC.